The sequence spans 142 residues: Hemoglobin subunit alpha-2 (142 aa).

The region spanning 2–142 (VLSAADKTNV…VSTVLTSKYR (141 aa)) is the Globin domain. Residue His-59 coordinates O2. Residue His-88 participates in heme b binding.

Belongs to the globin family. Heterotetramer of two alpha chains and two beta chains. In terms of tissue distribution, red blood cells.

Functionally, involved in oxygen transport from the lung to the various peripheral tissues. In terms of biological role, hemopressin acts as an antagonist peptide of the cannabinoid receptor CNR1. Hemopressin-binding efficiently blocks cannabinoid receptor CNR1 and subsequent signaling. In Equus quagga burchellii (Burchell's zebra), this protein is Hemoglobin subunit alpha-2 (HBA2).